A 748-amino-acid chain; its full sequence is Transcription factor FBD3 (748 aa).

Basic and acidic residues predominate over residues 1–10 (MPEQPRRPSD). The segment at 1–26 (MPEQPRRPSDQEQNQSETGPPTNKRR) is disordered. Positions 11 to 21 (QEQNQSETGPP) are enriched in polar residues. The zn(2)-C6 fungal-type DNA-binding region spans 32–59 (CNACRSRKSRCDGQRPSCSSCLSLGFDC). 2 disordered regions span residues 116–160 (GTIN…EGIP) and 417–438 (IPDE…TSGN). Positions 131-141 (APTKASAPSGA) are enriched in low complexity. Residues 429-438 (SGRSPATSGN) are compositionally biased toward polar residues.

Its subcellular location is the nucleus. In terms of biological role, transcription factor; part of the Fusarium detoxification of benzoxazolinone cluster 2 (FDB2) involved in the degradation of benzoxazolinones produced by the host plant. Maize, wheat, and rye produce the 2 benzoxazinone phytoanticipins 2,4-dihy-droxy-7-methoxy-1,4-benzoxazin-3-one (DIMBOA) and 2,4-dihydroxy-1,4-benzoxazin-3-one (DIBOA) that, due to their inherent instability once released, spontaneously degrade to the more stable corresponding benzoxazolinones, 6-methoxy-2-benzoxazolinone (MBOA) and 2-benzoxazolinone (BOA), respectively. FDB3 is not essentiel, but contributes to efficient BOA biotransformation. The polypeptide is Transcription factor FBD3 (Gibberella moniliformis (strain M3125 / FGSC 7600) (Maize ear and stalk rot fungus)).